The following is a 333-amino-acid chain: Cilia- and flagella-associated protein 119 (333 aa).

Over residues 1 to 10 (MITPSSSQSL) the composition is skewed to polar residues. Disordered regions lie at residues 1-70 (MITP…ANLF) and 309-333 (RLSS…TKTK). Ser34 carries the phosphoserine modification. Residues 44-58 (TDMQTESPAEATSSP) show a composition bias toward polar residues. The stretch at 284-319 (IKSQLSKELRQLQQLVEERLKESEERLSSKLAALEQ) forms a coiled coil.

The protein resides in the cell projection. The protein localises to the cilium. Its subcellular location is the flagellum. It is found in the cytoplasmic vesicle. It localises to the secretory vesicle. The protein resides in the acrosome. The protein localises to the cytoplasm. This chain is Cilia- and flagella-associated protein 119, found in Mus musculus (Mouse).